The primary structure comprises 822 residues: Adhesion G protein-coupled receptor E2 (822 aa).

The signal sequence occupies residues 1–18; sequence MGGRVFLAFCVWLTLLGA. Residues 19–530 lie on the Extracellular side of the membrane; that stretch reads ETQDSRDCAR…DVQEEDPVLT (512 aa). The EGF-like 1 domain occupies 22–63; sequence DSRDCARWCPENSSCVNATACRCNPGFSSSSEIFTSPTEICD. Cystine bridges form between Cys-26-Cys-36, Cys-30-Cys-42, Cys-44-Cys-62, Cys-68-Cys-82, and Cys-76-Cys-91. 2 N-linked (GlcNAc...) asparagine glycosylation sites follow: Asn-33 and Asn-38. An EGF-like 1; calcium-binding domain is found at 64 to 103; sequence DINECVPPSKVSCGKSSDCRNTEGSYDCVCNPGYELVSGA. The N-linked (GlcNAc...) asparagine glycan is linked to Asn-108. In terms of domain architecture, EGF-like 2; calcium-binding spans 116 to 159; it reads DVDECQQNPRLCKSYGTCVNTLGSFTCQCLPGFKFKPEDPKLCT. 5 disulfides stabilise this stretch: Cys-120–Cys-133, Cys-127–Cys-142, Cys-144–Cys-158, Cys-164–Cys-177, and Cys-171–Cys-186. Residues 160–198 enclose the EGF-like 3; calcium-binding domain; sequence DVNECTSGQNPCHSSTHCLNNVGSYQCRCRPGWQPIPGS. Asn-203, Asn-222, Asn-351, Asn-371, Asn-427, Asn-449, and Asn-453 each carry an N-linked (GlcNAc...) asparagine glycan. The EGF-like 4; calcium-binding domain maps to 209–247; that stretch reads DVDECSSGLHQCDNSTVCFNTVGSYTCRCRPGWEPKHGI. 2 cysteine pairs are disulfide-bonded: Cys-213-Cys-226 and Cys-220-Cys-235. The GAIN-B domain maps to 351–523; sequence NFSYPAGTEF…AVLMAPYDVQ (173 aa). 2 cysteine pairs are disulfide-bonded: Cys-475–Cys-505 and Cys-493–Cys-507. Positions 475-523 are GPS; sequence CVFWEHGQNGCGHWATTGCSTMDTRDTSTICRCTHLSSFAVLMAPYDVQ. A helical membrane pass occupies residues 531-551; sequence VITYMGLSLSLLCLLLAALTF. Topologically, residues 552 to 562 are cytoplasmic; that stretch reads LLCKAIQNIST. A helical transmembrane segment spans residues 563 to 583; the sequence is SLHLQLSLCLLLAHLLFLVAI. The Extracellular segment spans residues 584-589; sequence DRTEHE. Residues 590–610 traverse the membrane as a helical segment; that stretch reads VLCAIIASALHYLYLAAFTWM. Residues 611 to 637 are Cytoplasmic-facing; it reads LLEALYLFLTARNLMVVNYSSINRFTK. The helical transmembrane segment at 638-658 threads the bilayer; that stretch reads KLMFPVAYGVPAVTVAISAAS. Residues 659-676 lie on the Extracellular side of the membrane; it reads RPHLYGTPSRCWLQPEKG. Residues 677-697 traverse the membrane as a helical segment; it reads FIWGFLGPVCAIFSVNLALLL. The Cytoplasmic portion of the chain corresponds to 698–728; that stretch reads VTLWILKNRLSSLNNEVSTLQNTRMLAFKAT. Residues 729–749 form a helical membrane-spanning segment; sequence AQLFILGCTWCLGILQVGPAA. Over 750–753 the chain is Extracellular; it reads RVMA. Residues 754 to 774 form a helical membrane-spanning segment; sequence YLFTIINSLQGVFIFLVYCLL. The Cytoplasmic segment spans residues 775–822; the sequence is SQQVREQYRKWSKGFRKLRTESEMHTLSSSAKRDTPKPSTPGLLGLQS. The segment at 797–822 is disordered; it reads EMHTLSSSAKRDTPKPSTPGLLGLQS.

It belongs to the G-protein coupled receptor 2 family. Adhesion G-protein coupled receptor (ADGR) subfamily. As to quaternary structure, forms a heterodimer, consisting of a large extracellular region non-covalently linked to a seven-transmembrane moiety. Interacts with chondroitin sulfate; the interaction with chondroitin sulfate is calcium-dependent. Interacts with CD55. Post-translationally, autoproteolytically cleaved into 2 subunits, an extracellular alpha subunit and a seven-transmembrane beta subunit.

Its subcellular location is the cell membrane. It is found in the cell projection. The protein localises to the ruffle membrane. Its function is as follows. Cell surface receptor that binds to the chondroitin sulfate moiety of glycosaminoglycan chains and promotes cell attachment. Promotes granulocyte chemotaxis, degranulation and adhesion. In macrophages, promotes the release of inflammatory cytokines, including IL8 and TNF. Signals probably through G-proteins. The polypeptide is Adhesion G protein-coupled receptor E2 (ADGRE2) (Macaca mulatta (Rhesus macaque)).